Here is a 264-residue protein sequence, read N- to C-terminus: Small ribosomal subunit protein uS3 (264 aa).

The region spanning Val39 to Arg107 is the KH type-2 domain. Residues Asn211–Glu264 are disordered. Positions Glu221–Gly239 are enriched in basic and acidic residues. Residues Arg240 to Ser255 are compositionally biased toward gly residues.

This sequence belongs to the universal ribosomal protein uS3 family. Part of the 30S ribosomal subunit. Forms a tight complex with proteins S10 and S14.

Functionally, binds the lower part of the 30S subunit head. Binds mRNA in the 70S ribosome, positioning it for translation. The chain is Small ribosomal subunit protein uS3 from Ralstonia nicotianae (strain ATCC BAA-1114 / GMI1000) (Ralstonia solanacearum).